Here is a 1311-residue protein sequence, read N- to C-terminus: Sterol regulatory element-binding protein cleavage-activating protein (1311 aa).

Residues 1 to 18 are Cytoplasmic-facing; that stretch reads MPLIDKLRERISRAFYSH. Residues 19–39 traverse the membrane as a helical segment; the sequence is GLLCASYPIPIIILTALCILA. Residues 40–277 are Lumenal-facing; it reads SCYPLLKLPL…HIVHVHFKEE (238 aa). A loop-1 region spans residues 46–282; it reads KLPLPGTGPV…HFKEEIGIAE (237 aa). 2 N-linked (GlcNAc...) asparagine glycosylation sites follow: N242 and N261. Residues 278–298 traverse the membrane as a helical segment; that stretch reads IGIAELIPLVTTYIILFAYIY. An SSD domain is found at 282–440; the sequence is ELIPLVTTYI…MFFFTTVLSI (159 aa). Topologically, residues 299–310 are cytoplasmic; the sequence is FSTRKIDLVKSK. A helical membrane pass occupies residues 311-331; it reads WGLALAAVVTVLSSLLMSVGL. At 332 to 342 the chain is on the lumenal side; that stretch reads CTLFGLTPTLN. The chain crosses the membrane as a helical span at residues 343 to 363; it reads GGEIFPYLVVVIGLENVLVLT. At 364 to 399 the chain is on the cytoplasmic side; it reads KSVVSTPVDLEVKLRIAQGLRNESWFIMKNMATELG. The helical transmembrane segment at 400 to 420 threads the bilayer; it reads IILIGYFTLVPAIQEFCLFAV. V421 is a topological domain (lumenal). Residues 422–442 form a helical membrane-spanning segment; the sequence is GLVSDFFLQMFFFTTVLSIDI. Topologically, residues 443 to 512 are cytoplasmic; the sequence is RRMELADLNK…FFARTRLAQR (70 aa). The short motif at 445 to 450 is the ER export signal element; sequence MELADL. Residues 513–533 traverse the membrane as a helical segment; the sequence is IIMAGTVVWIGILVYTDPAGL. The segment at 529 to 726 is loop-7; sequence DPAGLRNYLT…QTPADVTLYK (198 aa). Residues 534–723 lie on the Lumenal side of the membrane; the sequence is RNYLTVHVTE…TENQTPADVT (190 aa). N-linked (GlcNAc...) asparagine glycosylation is found at N583 and N651. Residues 724 to 744 traverse the membrane as a helical segment; sequence LYKVAALGLASGIFLVLFFFL. Over 745 to 1311 the chain is Cytoplasmic; the sequence is LYRLLCPKNY…YVPSVLEKLD (567 aa). The interaction with srebf stretch occupies residues 747-1311; sequence RLLCPKNYGQ…YVPSVLEKLD (565 aa). WD repeat units follow at residues 790–827, 997–1034, 1037–1076, 1109–1146, 1149–1187, 1190–1227, and 1230–1267; these read GHHM…CLTI, SFES…LRCS, DGQS…NQLQ, AHRK…CLFT, GHSG…RVSH, GHRG…KLYS, and QDLG…LLQT.

This sequence belongs to the WD repeat SCAP family. In terms of assembly, membrane region forms a homotetramer. Component of the SCAP-SREBP complex (composed of SCAP and srebf1/srebp1 or srebf2/srebp2). Forms a ternary complex with insig1 or insig2 through its transmembrane domains at high sterol concentrations. Interacts with the SEC23-SEC24 complex.

The protein localises to the endoplasmic reticulum membrane. It localises to the golgi apparatus membrane. The protein resides in the cytoplasmic vesicle. It is found in the COPII-coated vesicle membrane. Its function is as follows. Escort protein required for cholesterol as well as lipid homeostasis. Regulates export of the SCAP-SREBP complex from the endoplasmic reticulum to the Golgi upon low cholesterol, thereby regulating the processing of sterol regulatory element-binding proteins (SREBPs) SREBF1/SREBP1 and SREBF2/SREBP2. At high sterol concentrations, formation of a ternary complex with INSIG (INSIG1 or INSIG2) leads to mask the ER export signal in SCAP, promoting retention of the complex in the endoplasmic reticulum. Low sterol concentrations trigger release of INSIG, a conformational change in the SSD domain of SCAP, unmasking of the ER export signal, promoting recruitment into COPII-coated vesicles and transport of the SCAP-SREBP to the Golgi: in the Golgi, SREBPs are then processed, releasing the transcription factor fragment of SREBPs from the membrane, its import into the nucleus and up-regulation of LDLR, INSIG1 and the mevalonate pathway. Binds cholesterol via its SSD domain. This is Sterol regulatory element-binding protein cleavage-activating protein from Xenopus laevis (African clawed frog).